The primary structure comprises 53 residues: MPQMMPINWIFFLFFFICIFLIFNIMNYFIYEKKMHLINKFNQKKKLTFNWKW.

Residues 9–29 traverse the membrane as a helical segment; the sequence is WIFFLFFFICIFLIFNIMNYF.

It belongs to the ATPase protein 8 family. F-type ATPases have 2 components, CF(1) - the catalytic core - and CF(0) - the membrane proton channel.

The protein resides in the mitochondrion membrane. Functionally, mitochondrial membrane ATP synthase (F(1)F(0) ATP synthase or Complex V) produces ATP from ADP in the presence of a proton gradient across the membrane which is generated by electron transport complexes of the respiratory chain. F-type ATPases consist of two structural domains, F(1) - containing the extramembraneous catalytic core and F(0) - containing the membrane proton channel, linked together by a central stalk and a peripheral stalk. During catalysis, ATP synthesis in the catalytic domain of F(1) is coupled via a rotary mechanism of the central stalk subunits to proton translocation. Part of the complex F(0) domain. Minor subunit located with subunit a in the membrane. In Bombyx mori (Silk moth), this protein is ATP synthase protein 8 (mt:ATPase8).